We begin with the raw amino-acid sequence, 149 residues long: MKVAIASDHGGVHIRNEIKELMDELQIEYIDMGCDCGSGSVDYPDYAFPVAEKVVSGEVDRGILICGTGIGMSISANKVKGIRCALAHDTFSAKATREHNDTNILAMGERVIGPGLAREIAKIWLTTEFTGGRHQTRIGKISDYEEKNL.

His-9 contacts substrate. The Proton acceptor role is filled by Cys-66. Residue 67-72 participates in substrate binding; that stretch reads GTGIGM. The active-site Proton donor is the His-99. Arg-133 contacts substrate.

The protein belongs to the LacAB/RpiB family.

The protein is Putative sugar phosphate isomerase YwlF (ywlF) of Bacillus subtilis (strain 168).